The sequence spans 264 residues: Ribonuclease H (264 aa).

Residues 55–88 are disordered; sequence GSRYSSSSGPYRRSTTSYGYSPYSSSSSNYSARH. The span at 56–85 shows a compositional bias: low complexity; it reads SRYSSSSGPYRRSTTSYGYSPYSSSSSNYS. Position 97 is a phosphoserine (S97). Residues 120–263 enclose the RNase H type-1 domain; sequence CSDRQVVYAD…ADMLARRGAS (144 aa). The Mg(2+) site is built by D129, E171, D191, and D255.

This sequence belongs to the RNase H family. Requires Mg(2+) as cofactor.

It catalyses the reaction Endonucleolytic cleavage to 5'-phosphomonoester.. Its function is as follows. Endonuclease that specifically degrades the RNA of RNA-DNA hybrids. The chain is Ribonuclease H (rnh1) from Schizosaccharomyces pombe (strain 972 / ATCC 24843) (Fission yeast).